A 1309-amino-acid polypeptide reads, in one-letter code: Mediator of RNA polymerase II transcription subunit 33A (1309 aa).

Positions 809 to 829 are disordered; the sequence is QTLNPVNSGTSSSSGAASEDS. The segment covering 816–826 has biased composition (low complexity); that stretch reads SGTSSSSGAAS.

The protein belongs to the Mediator complex subunit 33 family. In terms of assembly, component of the Mediator complex.

It is found in the nucleus. Its function is as follows. Component of the Mediator complex, a coactivator involved in the regulated transcription of nearly all RNA polymerase II-dependent genes. Mediator functions as a bridge to convey information from gene-specific regulatory proteins to the basal RNA polymerase II transcription machinery. The Mediator complex, having a compact conformation in its free form, is recruited to promoters by direct interactions with regulatory proteins and serves for the assembly of a functional preinitiation complex with RNA polymerase II and the general transcription factors. Involved in the repression of phenylpropanoid biosynthesis. May compete with MED33B for common binding partners or for occupancy in Mediator. This Arabidopsis thaliana (Mouse-ear cress) protein is Mediator of RNA polymerase II transcription subunit 33A (MED33A).